The sequence spans 298 residues: tRNA (guanine(9)-N1)-methyltransferase (298 aa).

Residues 1 to 10 show a composition bias toward polar residues; sequence MSDTSENSNA. The tract at residues 1–44 is disordered; sequence MSDTSENSNAEIPADTSDVKDKPKPIVRAPQFPPPPEGISKSQW. The SAM-dependent MTase TRM10-type domain maps to 96–285; that stretch reads PPKVNLNQSD…SVLPPRKLEV (190 aa). S-adenosyl-L-methionine contacts are provided by residues 192-193, Gly212, 216-220, Cys224, Leu238, and 250-252; these read LT, DKNRH, and KVL. The active-site Proton acceptor is Asp216.

This sequence belongs to the class IV-like SAM-binding methyltransferase superfamily. TRM10 family. As to quaternary structure, monomer.

It is found in the cytoplasm. The protein localises to the nucleus. The enzyme catalyses guanosine(9) in tRNA + S-adenosyl-L-methionine = N(1)-methylguanosine(9) in tRNA + S-adenosyl-L-homocysteine + H(+). S-adenosyl-L-methionine-dependent guanine N(1)-methyltransferase that catalyzes the formation of N(1)-methylguanine at position 9 (m1G9) in cytoplasmic tRNA. The chain is tRNA (guanine(9)-N1)-methyltransferase from Kluyveromyces lactis (strain ATCC 8585 / CBS 2359 / DSM 70799 / NBRC 1267 / NRRL Y-1140 / WM37) (Yeast).